The chain runs to 98 residues: uncharacterized protein (98 aa).

This is an uncharacterized protein from Methanocaldococcus jannaschii (strain ATCC 43067 / DSM 2661 / JAL-1 / JCM 10045 / NBRC 100440) (Methanococcus jannaschii).